The sequence spans 375 residues: Sperm microtubule associated protein 2 (375 aa).

The tract at residues 1-78 (MGELGEHRAS…MAGEELPETS (78 aa)) is disordered. A compositionally biased stretch (acidic residues) spans 59-75 (EPEEEIPPEEMAGEELP). THEG repeat units lie at residues 110–129 (AKGRKKRSRRLLELAKPKTN), 176–195 (TITVPVVSQRMEELSRPKRF), 214–233 (STLEYQASNRLKQLATPKVR), 250–269 (AAQMAVPTPRTLRLAKPRPP), 282–301 (PKPYVSDYNRLLQLATPKAL), 318–337 (VTKNAVASSRIISLAQPKIR), and 352–371 (ASLVAQASPRIYELATPKYI). Residue S287 is modified to Phosphoserine.

In terms of assembly, interacts with CCT5. In terms of tissue distribution, testis specific (at protein level). Specifically expressed in spermatids; Sertoli cells maintain the level of expression in spermatids. If isolated spermatids are cultivated for 16 hours alone, the expression of THEG is down-regulated. May require signals from Sertoli cells to initiate changes in its gene expression through spermatogenesis.

It is found in the nucleus. May be involved (but not essential) in spermatogenesis. This chain is Sperm microtubule associated protein 2, found in Mus musculus (Mouse).